We begin with the raw amino-acid sequence, 659 residues long: Nicastrin (659 aa).

An N-terminal signal peptide occupies residues 1-22 (MKIKNYFIIVFIIIVLSTDVIS). Residues 23-627 (SQSSIEDKMY…LFQVGSYANE (605 aa)) are Extracellular-facing. Asparagine 94, asparagine 172, asparagine 305, asparagine 389, asparagine 451, asparagine 475, asparagine 550, asparagine 553, and asparagine 600 each carry an N-linked (GlcNAc...) asparagine glycan. The helical transmembrane segment at 628–648 (IWFLVSGLIELLLSVGIIFYI) threads the bilayer. Over 649–659 (KKYLSKRYKLL) the chain is Cytoplasmic.

Belongs to the nicastrin family. As to quaternary structure, homodimer. Component of the gamma-secretase complex, a complex composed of a presenilin homodimer, nicastrin, aph1 and pen2.

It localises to the membrane. Functionally, essential subunit of the gamma-secretase complex, an endoprotease complex that catalyzes the intramembrane cleavage of integral membrane proteins such as Notch receptors and APP (amyloid-beta precursor protein). It probably represents a stabilizing cofactor required for the assembly of the gamma-secretase complex. The polypeptide is Nicastrin (ncstn) (Dictyostelium discoideum (Social amoeba)).